The chain runs to 180 residues: Tubulin polymerization-promoting protein homolog (180 aa).

2 stretches are compositionally biased toward basic and acidic residues: residues 136–158 (TGAH…RADT) and 169–180 (KNKDSYDKTHGK). Positions 136–180 (TGAHKERFDAEGKGKGKSGRADTTENTGYVGAYKNKDSYDKTHGK) are disordered.

It belongs to the TPPP family.

Functionally, regulator of microtubule dynamics. This Caenorhabditis elegans protein is Tubulin polymerization-promoting protein homolog.